A 94-amino-acid chain; its full sequence is MKISEKEVQHVAHLSRLHLDQDELASMTEQLDGILSYMEKLAEVDTEGVLPTTHAFSKTNAFREDIVKDSLSQEESLANGPVQNGTAFQVPRVI.

The protein belongs to the GatC family. In terms of assembly, heterotrimer of A, B and C subunits.

It carries out the reaction L-glutamyl-tRNA(Gln) + L-glutamine + ATP + H2O = L-glutaminyl-tRNA(Gln) + L-glutamate + ADP + phosphate + H(+). It catalyses the reaction L-aspartyl-tRNA(Asn) + L-glutamine + ATP + H2O = L-asparaginyl-tRNA(Asn) + L-glutamate + ADP + phosphate + 2 H(+). Functionally, allows the formation of correctly charged Asn-tRNA(Asn) or Gln-tRNA(Gln) through the transamidation of misacylated Asp-tRNA(Asn) or Glu-tRNA(Gln) in organisms which lack either or both of asparaginyl-tRNA or glutaminyl-tRNA synthetases. The reaction takes place in the presence of glutamine and ATP through an activated phospho-Asp-tRNA(Asn) or phospho-Glu-tRNA(Gln). In Desulfotalea psychrophila (strain LSv54 / DSM 12343), this protein is Aspartyl/glutamyl-tRNA(Asn/Gln) amidotransferase subunit C.